The following is a 1027-amino-acid chain: Scavenger receptor cysteine-rich domain-containing protein SCART1 (1027 aa).

The signal sequence occupies residues 1 to 19 (MRAALWTLGLGPLLLNLWA). At 20–906 (VPIGGPGALR…APFRTFWVVS (887 aa)) the chain is on the extracellular side. One can recognise an SRCR 1 domain in the interval 28–128 (LRLAYRHSTC…HAWVVVALCS (101 aa)). Intrachain disulfides connect cysteine 53-cysteine 117, cysteine 66-cysteine 127, and cysteine 97-cysteine 107. An N-linked (GlcNAc...) asparagine glycan is attached at asparagine 94. An N-linked (GlcNAc...) asparagine glycan is attached at asparagine 129. 7 SRCR domains span residues 135–227 (LRLV…VVCS), 232–326 (ARLV…LRCS), 328–428 (FRMV…AVCS), 434–534 (LRLR…VVCS), 555–656 (LSLH…VFCS), 661–761 (LRLR…AGLS), and 786–886 (LRVR…VRCW). 6 cysteine pairs are disulfide-bonded: cysteine 160–cysteine 216, cysteine 171–cysteine 226, cysteine 196–cysteine 206, cysteine 253–cysteine 315, cysteine 266–cysteine 325, and cysteine 297–cysteine 307. The N-linked (GlcNAc...) asparagine glycan is linked to asparagine 332. 7 disulfide bridges follow: cysteine 353/cysteine 417, cysteine 366/cysteine 427, cysteine 397/cysteine 407, cysteine 472/cysteine 533, cysteine 503/cysteine 513, cysteine 594/cysteine 655, and cysteine 625/cysteine 635. Disulfide bonds link cysteine 824/cysteine 885 and cysteine 855/cysteine 865. A helical transmembrane segment spans residues 907 to 927 (VVLGSLLGLLLLGLMAFLILP). Over 928 to 1027 (RVTQAMQRGL…AAFPLEEMTL (100 aa)) the chain is Cytoplasmic.

Mainly expressed by CD4(+) and CD8(+) T lymphocytes. Also highly expressed in small intestine and colon. Expressed (at protein level) in small intestine, stomach, gall bladder, and placental villi.

The protein resides in the membrane. Functionally, may play a role in the immune system, perhaps as a co-receptor on alphabeta and gammadelta T-cells. This chain is Scavenger receptor cysteine-rich domain-containing protein SCART1, found in Homo sapiens (Human).